The chain runs to 350 residues: Deoxyribonuclease-2-alpha (350 aa).

Positions 1 to 19 are cleaved as a signal peptide; the sequence is MAAPSSLLLAALLWVPAEA. A disulfide bridge links Cys-22 with Cys-162. Asn-89, Asn-215, Asn-269, and Asn-293 each carry an N-linked (GlcNAc...) asparagine glycan. 2 cysteine pairs are disulfide-bonded: Cys-270/Cys-350 and Cys-311/Cys-330. Residue His-298 is part of the active site.

This sequence belongs to the DNase II family. In terms of tissue distribution, ubiquitous.

The protein resides in the lysosome. It catalyses the reaction Endonucleolytic cleavage to nucleoside 3'-phosphates and 3'-phosphooligonucleotide end-products.. Functionally, hydrolyzes DNA under acidic conditions with a preference for double-stranded DNA. Plays a major role in the clearance of nucleic acids generated through apoptosis, hence preventing autoinflammation. Necessary for proper fetal development and for definitive erythropoiesis in fetal liver and bone marrow, where it degrades nuclear DNA expelled from erythroid precursor cells. In Rattus norvegicus (Rat), this protein is Deoxyribonuclease-2-alpha (Dnase2).